The primary structure comprises 171 residues: MPLLDSFAVDHTRMQAPAVRGAKTMNTPHGDAITVFDLRFCIPNKEVMPEKGIHTLEHLFAGFMRDHLNGNGVEIIDISPMGCRTGFYMSLIGTPDEQRVADAWKAAMADVLKVQDQNQIPELNVYQCGTYQMHSLSEAQDIARHILERDVRVNSNKELALPKEKLQELHI.

Residues His-54, His-58, and Cys-128 each contribute to the Fe cation site.

It belongs to the LuxS family. In terms of assembly, homodimer. The cofactor is Fe cation.

It carries out the reaction S-(5-deoxy-D-ribos-5-yl)-L-homocysteine = (S)-4,5-dihydroxypentane-2,3-dione + L-homocysteine. Its function is as follows. Involved in the synthesis of autoinducer 2 (AI-2) which is secreted by bacteria and is used to communicate both the cell density and the metabolic potential of the environment. The regulation of gene expression in response to changes in cell density is called quorum sensing. Catalyzes the transformation of S-ribosylhomocysteine (RHC) to homocysteine (HC) and 4,5-dihydroxy-2,3-pentadione (DPD). In Salmonella typhi, this protein is S-ribosylhomocysteine lyase.